Here is an 84-residue protein sequence, read N- to C-terminus: Esculentin-1Vb (84 aa).

An N-terminal signal peptide occupies residues 1-22; the sequence is MFTLKKPLLLIVLLGIISLSLC. Residues 23-36 constitute a propeptide that is removed on maturation; the sequence is EQERNADEDEESET. A disulfide bond links Cys-78 and Cys-84.

As to expression, expressed by the skin glands.

Its subcellular location is the secreted. Antimicrobial peptide. This chain is Esculentin-1Vb, found in Odorrana versabilis (Chinese bamboo leaf odorous frog).